A 792-amino-acid chain; its full sequence is Zinc finger protein 606 (792 aa).

Positions 62–133 (VTFKDVAVDF…EQACPQRTCP (72 aa)) constitute a KRAB domain. The C2H2-type 1; degenerate zinc finger occupies 289 to 311 (FKCTDAVKSFNHIIHFGDHKGIH). The segment at 317–344 (YEYKECHQIFNQSPSFNEHPRLHVGENQ) adopts a C2H2-type 2; degenerate zinc-finger fold. Residues 400 to 422 (YDYNECGTSFIWSSYLIQHKKTH) form a C2H2-type 3; degenerate zinc finger. 13 consecutive C2H2-type zinc fingers follow at residues 428–450 (YECDKCGKVFRNRSALTKHERTH), 456–478 (YECNKCGKAFSWNSHLIVHKRIH), 484–506 (YVCNECGKSFNWNSHLIGHQRTH), 512–534 (FECTECGKSFSWSSHLIAHMRMH), 540–562 (FKCDECEKAFRDYSALSKHERTH), 568–590 (YKCTECGKSFSWSSHLIAHQRTH), 596–618 (YNCQECGKAFRERSALTKHEIIH), 624–646 (YECNKCGKSCSQMAHLVRHQRTH), 652–674 (YECNKCGKSFSQSCHLVAHRRIH), 680–702 (YKCNQCERSFNCSSHLIAHRRTH), 708–730 (YRCNECGKAFNESSSLIVHLRNH), 736–758 (YKCNHCEKAFCKNSSLIIHQRMH), and 764–786 (FICSECGKAFSGHSALLQHQRNH).

The protein belongs to the krueppel C2H2-type zinc-finger protein family. Widely expressed in adult and fetal tissues.

It is found in the nucleus. In terms of biological role, may act as a transcriptional repressor. The sequence is that of Zinc finger protein 606 (ZNF606) from Homo sapiens (Human).